The primary structure comprises 837 residues: Translation initiation factor IF-2 (837 aa).

The span at 97 to 139 (AEEIEAEQRRELEEQRAAEEAARLKAEQEARERAEEEARRQAE) shows a compositional bias: basic and acidic residues. The interval 97 to 253 (AEEIEAEQRR…QHGFQSPTGP (157 aa)) is disordered. Residues 140–175 (AAKAQTAETAAPAAAESASSAEPAQVVAAVEAAAPA) show a composition bias toward low complexity. Residues 176–197 (PERKKEEPRRVEKPRSDDDERR) show a composition bias toward basic and acidic residues. The segment covering 198–208 (DRKHAQHRPSL) has biased composition (basic residues). A compositionally biased stretch (basic and acidic residues) spans 219-229 (RSGEDEADGFR). Over residues 230 to 244 (RGGRGGKSKLKKRNQ) the composition is skewed to basic residues. Residues 337-504 (ARAPVVTVMG…AVLLQAEILE (168 aa)) form the tr-type G domain. The G1 stretch occupies residues 346–353 (GHVDHGKT). A GTP-binding site is contributed by 346 to 353 (GHVDHGKT). Residues 371 to 375 (GITQH) are G2. The G3 stretch occupies residues 392 to 395 (DTPG). GTP is bound by residues 392–396 (DTPGH) and 446–449 (NKID). Positions 446 to 449 (NKID) are G4. The interval 482 to 484 (SAK) is G5.

The protein belongs to the TRAFAC class translation factor GTPase superfamily. Classic translation factor GTPase family. IF-2 subfamily.

It is found in the cytoplasm. Functionally, one of the essential components for the initiation of protein synthesis. Protects formylmethionyl-tRNA from spontaneous hydrolysis and promotes its binding to the 30S ribosomal subunits. Also involved in the hydrolysis of GTP during the formation of the 70S ribosomal complex. The polypeptide is Translation initiation factor IF-2 (Stutzerimonas stutzeri (strain A1501) (Pseudomonas stutzeri)).